The sequence spans 729 residues: Glycerophosphodiester phosphodiesterase GDPDL5 (729 aa).

An N-terminal signal peptide occupies residues 1-22 (MACPRVIFLILITFFILQTAFS). 2 GP-PDE domains span residues 33 to 320 (PAVI…YRAI) and 337 to 645 (ITII…ARYR). Asn88, Asn162, Asn218, Asn227, Asn285, Asn302, Asn390, Asn401, and Asn507 each carry an N-linked (GlcNAc...) asparagine glycan. The helical transmembrane segment at 709–729 (AIEVPFAFIAMAILVCFFISV) threads the bilayer.

It belongs to the glycerophosphoryl diester phosphodiesterase family. In terms of tissue distribution, expressed in stems, flowers and siliques.

The protein resides in the membrane. The enzyme catalyses a sn-glycero-3-phosphodiester + H2O = an alcohol + sn-glycerol 3-phosphate + H(+). This is Glycerophosphodiester phosphodiesterase GDPDL5 from Arabidopsis thaliana (Mouse-ear cress).